The sequence spans 664 residues: Protein cueball (664 aa).

A signal peptide spans 1–21; it reads MRNLGIAVTFAVLLVIGYVTA. The Extracellular segment spans residues 22–552; that stretch reads LEWDAVVTTD…VTYCKNSFNR (531 aa). N-linked (GlcNAc...) asparagine glycosylation is found at N40, N140, and N188. 3 LDL-receptor class B repeats span residues 115-157, 168-211, and 212-257; these read RKLY…ENHD, RHLY…DHYN, and NRIY…NSQY. 3 consecutive EGF-like domains span residues 367–399, 402–438, and 473–510; these read EIPI…FEGE, DRNI…ARCE, and EEYT…KRCE. Intrachain disulfides connect C371/C380, C375/C390, C406/C416, C410/C426, C428/C437, C477/C487, C481/C498, and C500/C509. N-linked (GlcNAc...) asparagine glycosylation occurs at N431. The N-linked (GlcNAc...) asparagine glycan is linked to N491. N551 is a glycosylation site (N-linked (GlcNAc...) asparagine). A helical transmembrane segment spans residues 553–573; it reads TVVYVSLAFTASLVTLVTILC. At 574 to 664 the chain is on the cytoplasmic side; that stretch reads TVRRMYERNR…KLPSCVAEKN (91 aa).

The protein belongs to the cueball family.

The protein localises to the cell membrane. Its function is as follows. Has a role in spermatogenesis and oogenesis. In Aedes aegypti (Yellowfever mosquito), this protein is Protein cueball.